A 352-amino-acid chain; its full sequence is S-norcoclaurine synthase 1 (352 aa).

The Fe2OG dioxygenase domain maps to 200 to 304 (KPLRTVFNRE…RLSIAAFHDP (105 aa)). Positions 228, 230, and 285 each coordinate Fe cation.

This sequence belongs to the iron/ascorbate-dependent oxidoreductase family. In terms of assembly, monomer. It depends on Fe cation as a cofactor.

The enzyme catalyses (4-hydroxyphenyl)acetaldehyde + dopamine = (S)-norcoclaurine + H2O. Its activity is regulated as follows. Inhibited by O-phenanthroline, but not by EDTA. In terms of biological role, involved in the biosynthesis of the common precursor of all benzylisoquinoline alkaloids such as morphine, sanguinarine, codeine or berberine. Condenses dopamine and phenylacetaldehyde, 3,4-dihydrophenylacetaldehyde or 4-hydroxyphenylacetaldehyde. The protein is S-norcoclaurine synthase 1 (NCS1) of Coptis japonica (Japanese goldthread).